The chain runs to 226 residues: Small ribosomal subunit protein uS3 (226 aa).

The KH type-2 domain maps to 39–107 (VRNFIRKKLA…PVHINIEEIR (69 aa)).

This sequence belongs to the universal ribosomal protein uS3 family. Part of the 30S ribosomal subunit. Forms a tight complex with proteins S10 and S14.

Its function is as follows. Binds the lower part of the 30S subunit head. Binds mRNA in the 70S ribosome, positioning it for translation. The sequence is that of Small ribosomal subunit protein uS3 from Alkalilimnicola ehrlichii (strain ATCC BAA-1101 / DSM 17681 / MLHE-1).